Reading from the N-terminus, the 515-residue chain is MQLNPAEISDLIKAKIENLSVNAEVRTRGTVISVTDGIVRIHGLSDAMQGEMLEFPGNTFGLAMNLERDSVGAVVLGEYEHIKEGDTVTCTGRILEVPVGRELVGRVVDALGRPIDGKGPINTTLTAPIEKIAPGVIARKSVDQPMQTGLKAIDSMVPVGRGQRELIIGDRQTGKTAVALDAIVNQKGTGVICIYVAIGQKASSIANVVRKLEEHGAMEHTIVVAATASEAAALQYIAPYSGCTMGEFFRDRGEDALIVYDDLSKQAVAYRQISLLLRRPPGREAYPGDVFYLHSRLLERAARVNEHEVEKLTNGEVKGKTGSLTALPIIETQAGDVSAFVPTNVISITDGQIFLETDLFNAGIRPAINAGISVSRVGGAAQTKVIKKLGGGIRLALAQYRELAAFSQFASDLDEATRKQLEHGEVVTELMKQKQFSTLNTAEMALTLWAINNGSYSDVPVAKALAFESEFLSFVRTQHPEVLEAVNASGAMSDESEKTLEAAMKSFKSSYAYQA.

Residue 169–176 (GDRQTGKT) participates in ATP binding.

Belongs to the ATPase alpha/beta chains family. F-type ATPases have 2 components, CF(1) - the catalytic core - and CF(0) - the membrane proton channel. CF(1) has five subunits: alpha(3), beta(3), gamma(1), delta(1), epsilon(1). CF(0) has three main subunits: a(1), b(2) and c(9-12). The alpha and beta chains form an alternating ring which encloses part of the gamma chain. CF(1) is attached to CF(0) by a central stalk formed by the gamma and epsilon chains, while a peripheral stalk is formed by the delta and b chains.

The protein localises to the cell inner membrane. It catalyses the reaction ATP + H2O + 4 H(+)(in) = ADP + phosphate + 5 H(+)(out). Its function is as follows. Produces ATP from ADP in the presence of a proton gradient across the membrane. The alpha chain is a regulatory subunit. The chain is ATP synthase subunit alpha from Neisseria meningitidis serogroup C (strain 053442).